An 812-amino-acid chain; its full sequence is DNA replication licensing factor MCM3 (812 aa).

Ala2 is subject to N-acetylalanine. Residue Ser160 is modified to Phosphoserine. Position 293 is an N6-acetyllysine (Lys293). Residues 295–502 (VFEQLARSLA…QDREISDHVL (208 aa)) enclose the MCM domain. 5 residues coordinate ADP: Gln353, Leu393, Glu394, Ala395, and Ala397. Residues 477–480 (SRFD) carry the Arginine finger motif. Lys547 carries the N6-acetyllysine modification. Residue Ser611 is modified to Phosphoserine. Arg664 serves as a coordination point for ATP. Positions 664 to 744 (RKKASEDESD…TQDSQKVELS (81 aa)) are disordered. Phosphoserine occurs at positions 668, 672, and 681. Over residues 670–681 (DESDLEDEEEKS) the composition is skewed to acidic residues. Residue Tyr705 is modified to Phosphotyrosine. At Ser708 the chain carries Phosphoserine. A phosphothreonine mark is found at Thr719, Thr722, and Thr729. The span at 720 to 744 (PKTDDSQEKTDDSQETQDSQKVELS) shows a compositional bias: basic and acidic residues. Phosphoserine is present on residues Ser732 and Ser738.

Belongs to the MCM family. As to quaternary structure, component of the MCM2-7 complex. The complex forms a toroidal hexameric ring with the proposed subunit order MCM2-MCM6-MCM4-MCM7-MCM3-MCM5. Component of the CMG helicase complex, a hexameric ring of related MCM2-7 subunits stabilized by CDC45 and the tetrameric GINS complex. Associated with the replication-specific DNA polymerase alpha. Interacts with MCMBP. Interacts with ANKRD17. Interacts with MCM3AP; this interaction leads to MCM3 acetylation. In terms of processing, acetylated by MCM3AP. Post-translationally, O-glycosylated (O-GlcNAcylated), in a cell cycle-dependent manner.

Its subcellular location is the nucleus. It is found in the chromosome. The catalysed reaction is ATP + H2O = ADP + phosphate + H(+). Acts as a component of the MCM2-7 complex (MCM complex) which is the replicative helicase essential for 'once per cell cycle' DNA replication initiation and elongation in eukaryotic cells. Core component of CDC45-MCM-GINS (CMG) helicase, the molecular machine that unwinds template DNA during replication, and around which the replisome is built. The active ATPase sites in the MCM2-7 ring are formed through the interaction surfaces of two neighboring subunits such that a critical structure of a conserved arginine finger motif is provided in trans relative to the ATP-binding site of the Walker A box of the adjacent subunit. The six ATPase active sites, however, are likely to contribute differentially to the complex helicase activity. Required for the entry in S phase and for cell division. The sequence is that of DNA replication licensing factor MCM3 (Mcm3) from Mus musculus (Mouse).